We begin with the raw amino-acid sequence, 327 residues long: Aspartate--ammonia ligase (327 aa).

This sequence belongs to the class-II aminoacyl-tRNA synthetase family. AsnA subfamily.

It localises to the cytoplasm. It carries out the reaction L-aspartate + NH4(+) + ATP = L-asparagine + AMP + diphosphate + H(+). The protein operates within amino-acid biosynthesis; L-asparagine biosynthesis; L-asparagine from L-aspartate (ammonia route): step 1/1. The chain is Aspartate--ammonia ligase from Bacillus cereus (strain G9842).